A 243-amino-acid polypeptide reads, in one-letter code: Geranylgeranylglyceryl phosphate synthase (243 aa).

Mg(2+) is bound by residues Asp-29 and Ser-58. Sn-glycerol 1-phosphate is bound by residues 178–184, 209–210, and 231–232; these read YLEAGSG, GG, and GT.

Belongs to the GGGP/HepGP synthase family. Group II subfamily. Homodimer. Mg(2+) is required as a cofactor.

The catalysed reaction is sn-glycerol 1-phosphate + (2E,6E,10E)-geranylgeranyl diphosphate = sn-3-O-(geranylgeranyl)glycerol 1-phosphate + diphosphate. Functionally, prenyltransferase that catalyzes the transfer of the geranylgeranyl moiety of geranylgeranyl diphosphate (GGPP) to the C3 hydroxyl of sn-glycerol-1-phosphate (G1P). This is Geranylgeranylglyceryl phosphate synthase from Flavobacterium johnsoniae (strain ATCC 17061 / DSM 2064 / JCM 8514 / BCRC 14874 / CCUG 350202 / NBRC 14942 / NCIMB 11054 / UW101) (Cytophaga johnsonae).